Consider the following 223-residue polypeptide: Deoxyribose-phosphate aldolase (223 aa).

The active-site Proton donor/acceptor is the Asp-91. Lys-153 serves as the catalytic Schiff-base intermediate with acetaldehyde. The active-site Proton donor/acceptor is Lys-182.

This sequence belongs to the DeoC/FbaB aldolase family. DeoC type 1 subfamily.

The protein resides in the cytoplasm. The catalysed reaction is 2-deoxy-D-ribose 5-phosphate = D-glyceraldehyde 3-phosphate + acetaldehyde. It participates in carbohydrate degradation; 2-deoxy-D-ribose 1-phosphate degradation; D-glyceraldehyde 3-phosphate and acetaldehyde from 2-deoxy-alpha-D-ribose 1-phosphate: step 2/2. Its function is as follows. Catalyzes a reversible aldol reaction between acetaldehyde and D-glyceraldehyde 3-phosphate to generate 2-deoxy-D-ribose 5-phosphate. The protein is Deoxyribose-phosphate aldolase of Streptococcus pyogenes serotype M12 (strain MGAS2096).